We begin with the raw amino-acid sequence, 473 residues long: MKTDTSTFLAQQIVRLRRRDQIRRLMQRDKTPLAILLMAAVVGTLTGLVGVAFEKAVSWVQNMRIGALVQVADHAFLLWPLAFILSALLAMVGYFLVRKFAPEAGGSGIPEIEGALEELRPVRWWRVLPVKFIGGMGTLGAGMVLGREGPTVQIGGNLGRMVLDVFRMRSAEARHTLLATGAAAGLSAAFNAPLAGILFIIEEMRPQFRYNLISIKAVFTGVIMSSIVFRIFNGEAPIIEVGKLSDAPVNTLWLYLILGIIFGCVGPVFNSLVLRTQDMFQRFHGGEIKKWVLMGGAIGGLCGILGLIEPEAAGGGFNLIPIAAAGNFSVGLLLFIFITRVVTTLLCFSSGAPGGIFAPMLALGTLLGTAFGMAAAVLFPQYHLEAGTFAIAGMGALMAASVRAPLTGIVLVLEMTDNYQLILPMIITCLGATLLAQFLGGKPLYSTILARTLAKQDAEQAAKNQNAPAGENT.

Residues 1–32 (MKTDTSTFLAQQIVRLRRRDQIRRLMQRDKTP) are Cytoplasmic-facing. Residues 33–69 (LAILLMAAVVGTLTGLVGVAFEKAVSWVQNMRIGALV) traverse the membrane as a helical segment. Topologically, residues 70–76 (QVADHAF) are periplasmic. The chain crosses the membrane as a helical span at residues 77 to 100 (LLWPLAFILSALLAMVGYFLVRKF). The short motif at 106 to 110 (GSGIP) is the Selectivity filter part_1 element. Chloride is bound at residue Ser-107. The helical intramembrane region spans 109–116 (IPEIEGAL). At 117-123 (EELRPVR) the chain is on the cytoplasmic side. 2 consecutive transmembrane segments (helical) span residues 124–141 (WWRV…TLGA) and 148–166 (EGPT…LDVF). The Selectivity filter part_2 motif lies at 146–150 (GREGP). Residues 167–176 (RMRSAEARHT) are Cytoplasmic-facing. Intramembrane regions (helical) lie at residues 177–189 (LLAT…LSAA) and 193–201 (PLAGILFII). The Cytoplasmic segment spans residues 202 to 214 (EEMRPQFRYNLIS). Residues 215-232 (IKAVFTGVIMSSIVFRIF) traverse the membrane as a helical segment. At 233-252 (NGEAPIIEVGKLSDAPVNTL) the chain is on the periplasmic side. The chain crosses the membrane as a helical span at residues 253–281 (WLYLILGIIFGCVGPVFNSLVLRTQDMFQ). The Cytoplasmic portion of the chain corresponds to 282–287 (RFHGGE). Residues 288–309 (IKKWVLMGGAIGGLCGILGLIE) form a helical membrane-spanning segment. At 310–329 (PEAAGGGFNLIPIAAAGNFS) the chain is on the periplasmic side. 2 helical membrane passes run 330-349 (VGLL…LCFS) and 355-376 (GIFA…MAAA). A Selectivity filter part_3 motif is present at residues 355–359 (GIFAP). 2 residues coordinate chloride: Ile-356 and Phe-357. The Periplasmic segment spans residues 377-386 (VLFPQYHLEA). The helical intramembrane region spans 387-401 (GTFAIAGMGALMAAS). The segment at residues 402 to 404 (VRA) is an intramembrane region (note=Loop between two helices). Positions 405 to 416 (PLTGIVLVLEMT) form an intramembrane region, helical. The segment at residues 417 to 421 (DNYQL) is an intramembrane region (note=Loop between two helices). The helical transmembrane segment at 422-438 (ILPMIITCLGATLLAQF) threads the bilayer. Over 439 to 473 (LGGKPLYSTILARTLAKQDAEQAAKNQNAPAGENT) the chain is Cytoplasmic. Tyr-445 is a binding site for chloride.

This sequence belongs to the chloride channel (TC 2.A.49) family. ClcA subfamily. Homodimer.

Its subcellular location is the cell inner membrane. The catalysed reaction is 2 chloride(in) + H(+)(out) = 2 chloride(out) + H(+)(in). Functionally, proton-coupled chloride transporter. Functions as antiport system and exchanges two chloride ions for 1 proton. Probably acts as an electrical shunt for an outwardly-directed proton pump that is linked to amino acid decarboxylation, as part of the extreme acid resistance (XAR) response. The polypeptide is H(+)/Cl(-) exchange transporter ClcA (Salmonella newport (strain SL254)).